A 94-amino-acid chain; its full sequence is Pyrimidine/purine nucleoside phosphorylase (94 aa).

The protein belongs to the nucleoside phosphorylase PpnP family.

The catalysed reaction is a purine D-ribonucleoside + phosphate = a purine nucleobase + alpha-D-ribose 1-phosphate. It catalyses the reaction adenosine + phosphate = alpha-D-ribose 1-phosphate + adenine. It carries out the reaction cytidine + phosphate = cytosine + alpha-D-ribose 1-phosphate. The enzyme catalyses guanosine + phosphate = alpha-D-ribose 1-phosphate + guanine. The catalysed reaction is inosine + phosphate = alpha-D-ribose 1-phosphate + hypoxanthine. It catalyses the reaction thymidine + phosphate = 2-deoxy-alpha-D-ribose 1-phosphate + thymine. It carries out the reaction uridine + phosphate = alpha-D-ribose 1-phosphate + uracil. The enzyme catalyses xanthosine + phosphate = alpha-D-ribose 1-phosphate + xanthine. In terms of biological role, catalyzes the phosphorolysis of diverse nucleosides, yielding D-ribose 1-phosphate and the respective free bases. Can use uridine, adenosine, guanosine, cytidine, thymidine, inosine and xanthosine as substrates. Also catalyzes the reverse reactions. The sequence is that of Pyrimidine/purine nucleoside phosphorylase from Aeromonas hydrophila subsp. hydrophila (strain ATCC 7966 / DSM 30187 / BCRC 13018 / CCUG 14551 / JCM 1027 / KCTC 2358 / NCIMB 9240 / NCTC 8049).